The chain runs to 1152 residues: Receptor-type guanylate cyclase gcy-8 (1152 aa).

An N-terminal signal peptide occupies residues 1–21 (MRTKKAFLLLTFNVLIYLAAC). Over 22-506 (QETERILANN…GYRNERCDYT (485 aa)) the chain is Extracellular. N-linked (GlcNAc...) asparagine glycans are attached at residues asparagine 31, asparagine 55, asparagine 385, and asparagine 465. A helical transmembrane segment spans residues 507–527 (LIIIGAALILLFIVAAVSAFF). At 528-1152 (AQKILEKRAL…NLKNPTGLQR (625 aa)) the chain is on the cytoplasmic side. One can recognise a Protein kinase domain in the interval 567–857 (RTKMSNMNYG…RIKLNVETYL (291 aa)). ATP contacts are provided by residues 573–581 (MNYGSRNHA) and lysine 593. Positions 861-899 (GSLVDQMTRMMEQYANNLEKLVAERTGMLEEANQRADRL) form a coiled coil. The region spanning 927-1057 (TVLFSDIVGF…DTVNMASRME (131 aa)) is the Guanylate cyclase domain. Mg(2+) contacts are provided by aspartate 932, isoleucine 933, and aspartate 976.

This sequence belongs to the adenylyl cyclase class-4/guanylyl cyclase family. In terms of tissue distribution, expressed bilaterally in AFD sensory neurons.

Its subcellular location is the cell membrane. The protein localises to the cell projection. The protein resides in the cilium. The catalysed reaction is GTP = 3',5'-cyclic GMP + diphosphate. Its activity is regulated as follows. Inhibited by chloride with an IC(50) of 60 mM. In terms of biological role, guanylate cyclase involved in the production of the second messenger cGMP. Regulates thermotaxis responses in AFD sensory neurons. May regulate AFD neuronal activity such as calcium responses to temperature gradients. Maintains the microvilli receptive ending morphology of the AFD thermosensory neurons by regulating cGMP levels downstream of kcc-3. cGMP levels antagonize the actin cytoskeleton regulator wsp-1. In Caenorhabditis elegans, this protein is Receptor-type guanylate cyclase gcy-8.